The following is a 284-amino-acid chain: 2-dehydro-3-deoxyphosphooctonate aldolase (284 aa).

The protein belongs to the KdsA family.

It localises to the cytoplasm. It catalyses the reaction D-arabinose 5-phosphate + phosphoenolpyruvate + H2O = 3-deoxy-alpha-D-manno-2-octulosonate-8-phosphate + phosphate. It functions in the pathway carbohydrate biosynthesis; 3-deoxy-D-manno-octulosonate biosynthesis; 3-deoxy-D-manno-octulosonate from D-ribulose 5-phosphate: step 2/3. It participates in bacterial outer membrane biogenesis; lipopolysaccharide biosynthesis. In Proteus mirabilis (strain HI4320), this protein is 2-dehydro-3-deoxyphosphooctonate aldolase.